The following is a 309-amino-acid chain: MEFKHISVLLEETIDSLNIKEDGVYVDCTLGGGGHSKEILKKLSHKGKLIGIDQDTSAIKAAKEKLKDYENIIYVHNNFYNIDSILEELDIDKVDGIIMDLGVSSYQLDEASRGFSYMKDAPLDMRMNREENLSAYGVINNYEEEELFKILKNYGEEKFSRKIARFIVEKRTENPIETTGELVEIIRKAIPAKFQREGHPAKRTFQAIRIEVNKELQILNKAIEDSVNRLNKDGRLSIITFHSLEDRIVKVKFKELEKPCTCPPSFPICVCGKEPQIKIITKKPIEPSKEEKEINSRSRSAKLRVCRKI.

S-adenosyl-L-methionine is bound by residues 33–35 (GGH), Asp-53, Phe-79, Asp-100, and Gln-107.

It belongs to the methyltransferase superfamily. RsmH family.

Its subcellular location is the cytoplasm. It carries out the reaction cytidine(1402) in 16S rRNA + S-adenosyl-L-methionine = N(4)-methylcytidine(1402) in 16S rRNA + S-adenosyl-L-homocysteine + H(+). Functionally, specifically methylates the N4 position of cytidine in position 1402 (C1402) of 16S rRNA. In Clostridium botulinum (strain Okra / Type B1), this protein is Ribosomal RNA small subunit methyltransferase H.